Consider the following 161-residue polypeptide: Long arms of the bivalent protein 1 (161 aa).

A PP1 binding motif motif is present at residues 72 to 75 (KVIW). The tract at residues 85–161 (GTMFEDFKED…SDKTMCSGQS (77 aa)) is disordered. Over residues 97 to 115 (QESVSSISNNEANWGSSVN) the composition is skewed to polar residues. A compositionally biased stretch (basic and acidic residues) spans 120-129 (NYEKMQKEET). Residues 130–151 (FDPYDSDSDTSEDSDFDEDFED) show a composition bias toward acidic residues.

As to quaternary structure, interacts with gsp-1 and gsp-2; the interaction is direct.

Its subcellular location is the chromosome. The protein resides in the nucleus. Involved in sister chromatid cohesion during mitosis and meiosis. In association with the gsp-2 phosphatase, it both restricts the localization and antagonizes the function of the air-2 kinase during meiosis I and mitosis to promote chromatid cohesion and spindle attachment. This in turn, drives germ cell immortality. Furthermore, may play a role in ensuring the timely assembly of the synaptonemal complex during prophase I of meiosis. The protein is Long arms of the bivalent protein 1 of Caenorhabditis elegans.